The chain runs to 141 residues: MAESLICNSTQSRVSSVLNRDVKQFGKKFMFDSNEETCWNSDQGESQWVLLEFPQHVKVSEVRLQFQGGFSGKSCKLEGSSKDENLRHILNFYPEDNNSLQSFPIPDAPLVQKLKIVFENSTDFFGRIIVYTLDILGEKDL.

The protein belongs to the NR2C2AP family.

It is found in the nucleus. Functionally, may act as a repressor of nr2c2-mediated transactivation by suppressing the binding between nr2c2 and its response element in target genes. This is Nuclear receptor 2C2-associated protein (nr2c2ap) from Danio rerio (Zebrafish).